We begin with the raw amino-acid sequence, 298 residues long: Inosose dehydratase (298 aa).

The protein belongs to the IolE/MocC family. Glutathione is required as a cofactor. It depends on Co(2+) as a cofactor. Requires Mn(2+) as cofactor.

The catalysed reaction is scyllo-inosose = 3D-3,5/4-trihydroxycyclohexane-1,2-dione + H2O. Its pathway is polyol metabolism; myo-inositol degradation into acetyl-CoA; acetyl-CoA from myo-inositol: step 2/7. Functionally, catalyzes the dehydration of inosose (2-keto-myo-inositol, 2KMI or 2,4,6/3,5-pentahydroxycyclohexanone) to 3D-(3,5/4)-trihydroxycyclohexane-1,2-dione (D-2,3-diketo-4-deoxy-epi-inositol). This Geobacillus thermodenitrificans (strain NG80-2) protein is Inosose dehydratase.